Here is a 177-residue protein sequence, read N- to C-terminus: Adenine phosphoribosyltransferase (177 aa).

This sequence belongs to the purine/pyrimidine phosphoribosyltransferase family. As to quaternary structure, homodimer.

Its subcellular location is the cytoplasm. The catalysed reaction is AMP + diphosphate = 5-phospho-alpha-D-ribose 1-diphosphate + adenine. It functions in the pathway purine metabolism; AMP biosynthesis via salvage pathway; AMP from adenine: step 1/1. In terms of biological role, catalyzes a salvage reaction resulting in the formation of AMP, that is energically less costly than de novo synthesis. The sequence is that of Adenine phosphoribosyltransferase from Leptospira biflexa serovar Patoc (strain Patoc 1 / Ames).